Consider the following 465-residue polypeptide: ATP-dependent rRNA helicase rrp3 (465 aa).

Basic and acidic residues predominate over residues 1 to 22 (MAPSEKKLTEDKKNSSLNKKIE). A disordered region spans residues 1-44 (MAPSEKKLTEDKKNSSLNKKIETSNSSSEKSSENNNGDSQNNEA). Positions 23–36 (TSNSSSEKSSENNN) are enriched in low complexity. The Q motif signature appears at 46-74 (KTFKELGVIDELCEACEKLGFKTPTPIQQ). The 172-residue stretch at 77–248 (IPVVLNKRDV…RASLHQPVRV (172 aa)) folds into the Helicase ATP-binding domain. ATP is bound at residue 90–97 (AQTGSGKT). A DEAD box motif is present at residues 196–199 (DEAD). The Helicase C-terminal domain occupies 275 to 419 (YLVYLVNELA…EYEIDKEGVF (145 aa)). The segment covering 442-453 (RRKSKGKLHTKR) has biased composition (basic residues). A disordered region spans residues 442-465 (RRKSKGKLHTKRKRDDLDREEQIY). Residues 454 to 465 (KRDDLDREEQIY) are compositionally biased toward basic and acidic residues.

It belongs to the DEAD box helicase family. DDX47/RRP3 subfamily. In terms of assembly, interacts with the SSU processome.

The protein resides in the nucleus. The catalysed reaction is ATP + H2O = ADP + phosphate + H(+). Functionally, ATP-dependent rRNA helicase required for pre-ribosomal RNA processing. Involved in the maturation of the 35S-pre-rRNA and to its cleavage to mature 18S rRNA. This Schizosaccharomyces pombe (strain 972 / ATCC 24843) (Fission yeast) protein is ATP-dependent rRNA helicase rrp3.